A 904-amino-acid polypeptide reads, in one-letter code: MISGLLKKIFGSRNDRLIKQYSQNVKRINALEPAMQALSDEQLRAKTDEFRQRHANGESLDDLLPEAFAVVREAGQRALGMRHFDVQMIGGMVLHDGKIAEMRTGEGKTLVGTLPAYLNAISGKGVHVITVNDYLATRDSDWMGRLHRFLGLTVGVNLSQMDHEAKQAAYAADITYGTNNEFGFDYLRDNMVYTAGERVQRSLNFAIVDEVDSILIDEARTPLIISGQAEDHTDLYLRMKDVVPNLTRAMEEKDEGDYWVDEKGHQVHLSETGYEHAEQLLAEYGLLKEGTSLYDAANITLMHHLNAALRGMTLFHKDQHYVVQNGEVVIVDEFTGRLMAGRRWSDGLHQAVEAKEGVQIQAENQTLASITFQNYFRMYNKLAGMTGTADTEAYEFHQIYGLETVVIPTHRPMVRKDMNDLVYKTADEKHAAIIADIKDCAKRGQPVLVGTTSIEASELLSGLLDKESLPHQVLNAKQHAREAEIVVQAGRPGMVTIATNMAGRGTDIVLGGNIEKQLAAIRDDESLPVEEREQKAAAMKAEWQEVHNAVLASGGLHIIGSERHESRRIDNQLRGRAGRQGDAGSSRFYLSLDDPLLRIFAGERLRAIMDKLKMPEGEAIEHPLVTRSLESAQRKVEARNFDIRKQLLEYDDVSNDQRKVIYQQRNELLETDDISETITAMRQSVIAETFRTYVPAESVEEQWDMEGLERALASDLQIIAPVAQWFKDEPTLSDEEILERITKNADEAYQAKIDLVGDGTFHQFERNVMLQSLDSHWREHLAALDHLRQGIHLRGYAQKNPKQEYKREAFELFEGLLDLVRREVTRVVFTVQIRTPEDVEETAPHAEVQNVQYQHAGYDEALGEGEGAEAAGQQPADAGPKIGRNDPCPCGSGKKYKHCHGKLS.

Residues Gln87, 105 to 109 (GEGKT), and Asp507 each bind ATP. Residues 865-887 (GEGAEAAGQQPADAGPKIGRNDP) form a disordered region. Residues 868–880 (AEAAGQQPADAGP) are compositionally biased toward low complexity. 4 residues coordinate Zn(2+): Cys888, Cys890, Cys899, and His900.

It belongs to the SecA family. In terms of assembly, monomer and homodimer. Part of the essential Sec protein translocation apparatus which comprises SecA, SecYEG and auxiliary proteins SecDF-YajC and YidC. The cofactor is Zn(2+).

The protein localises to the cell inner membrane. It localises to the cytoplasm. The enzyme catalyses ATP + H2O + cellular proteinSide 1 = ADP + phosphate + cellular proteinSide 2.. Its function is as follows. Part of the Sec protein translocase complex. Interacts with the SecYEG preprotein conducting channel. Has a central role in coupling the hydrolysis of ATP to the transfer of proteins into and across the cell membrane, serving both as a receptor for the preprotein-SecB complex and as an ATP-driven molecular motor driving the stepwise translocation of polypeptide chains across the membrane. In Dechloromonas aromatica (strain RCB), this protein is Protein translocase subunit SecA.